A 183-amino-acid polypeptide reads, in one-letter code: tRNA-splicing endonuclease (183 aa).

Residues tyrosine 120, histidine 128, and lysine 159 contribute to the active site.

The protein belongs to the tRNA-intron endonuclease family. Archaeal short subfamily. Homotetramer; although the tetramer contains four active sites, only two participate in the cleavage. Therefore, it should be considered as a dimer of dimers.

The catalysed reaction is pretRNA = a 3'-half-tRNA molecule with a 5'-OH end + a 5'-half-tRNA molecule with a 2',3'-cyclic phosphate end + an intron with a 2',3'-cyclic phosphate and a 5'-hydroxyl terminus.. Endonuclease that removes tRNA introns. Cleaves pre-tRNA at the 5'- and 3'-splice sites to release the intron. The products are an intron and two tRNA half-molecules bearing 2',3' cyclic phosphate and 5'-OH termini. Recognizes a pseudosymmetric substrate in which 2 bulged loops of 3 bases are separated by a stem of 4 bp. In Pyrobaculum aerophilum (strain ATCC 51768 / DSM 7523 / JCM 9630 / CIP 104966 / NBRC 100827 / IM2), this protein is tRNA-splicing endonuclease.